Here is a 579-residue protein sequence, read N- to C-terminus: Leucine-rich repeat-containing protein 15 (579 aa).

The signal sequence occupies residues Met1 to Ala21. The LRRNT domain occupies Tyr22–Trp53. Topologically, residues Tyr22 to Gly536 are extracellular. LRR repeat units lie at residues Asn54–Asn75, Ala78–Asn99, Ser102–Asp123, Asn126–Gln147, Asn150–His171, Gly174–His195, Asn198–Ala219, Asn222–Asn243, Asn246–Gln267, His270–Pro291, Asn294–His315, Gln318–Gly339, Asn342–Ser363, Asn366–Asn387, and Gly390–His411. Residue Asn75 is glycosylated (N-linked (GlcNAc...) asparagine). Asn369 carries N-linked (GlcNAc...) asparagine glycosylation. In terms of domain architecture, LRRCT spans Asn423 to Gly473. The interval Val476 to Thr509 is disordered. Low complexity predominate over residues Ser485–Thr506. A helical transmembrane segment spans residues Leu537–Ile557. Topologically, residues Cys558–Cys579 are cytoplasmic.

In terms of tissue distribution, expressed in chodrocytes (at protein level).

It localises to the cell membrane. In Mus musculus (Mouse), this protein is Leucine-rich repeat-containing protein 15 (Lrrc15).